Reading from the N-terminus, the 1575-residue chain is Ras GTPase-activating-like protein IQGAP2 (1575 aa).

S16 is modified (phosphoserine). Positions 41–156 (LCHLEEAKRW…YCIHALSLYL (116 aa)) constitute a Calponin-homology (CH) domain. T356 carries the phosphothreonine modification. The region spanning 594 to 627 (ESSEGSWVTLNVQEKYNYYYNTDSKEGSWVPPEL) is the WW domain. Phosphoserine occurs at positions 595 and 599. IQ domains lie at 690-719 (QTES…VFAG), 720-749 (NVDS…YFED), and 750-779 (HKNE…SENP). Phosphothreonine occurs at positions 782, 881, 1002, and 1269. Residues 933–1182 (YLLLKLFKTA…QEFRKYFQEA (250 aa)) form the Ras-GAP domain. Phosphoserine is present on residues S1279 and S1461.

Binds to activated CDC42 and RAC1 but does not seem to stimulate their GTPase activity. Associates with calmodulin. This is Ras GTPase-activating-like protein IQGAP2 (Iqgap2) from Mus musculus (Mouse).